The sequence spans 189 residues: GTPase NRas (189 aa).

Residues 10 to 18 (GAGGVGKSA) and 29 to 30 (VD) each bind GTP. The Effector region signature appears at 32–40 (YDPTIEDSY). Residue 57 to 61 (DTAGQ) participates in GTP binding. A Phosphoserine modification is found at S89. 116-119 (NKCD) provides a ligand contact to GTP. Positions 166 to 185 (YRMKKLNSSEDGTQGCMGLP) are hypervariable region. K170 is covalently cross-linked (Glycyl lysine isopeptide (Lys-Gly) (interchain with G-Cter in ubiquitin)). C181 carries S-palmitoyl cysteine lipidation. C186 carries the S-farnesyl cysteine lipid modification. Positions 187–189 (VVM) are cleaved as a propeptide — removed in mature form.

The protein belongs to the small GTPase superfamily. Ras family. Interacts (active GTP-bound form preferentially) with RGS14. Interacts (active GTP-bound form) with RASSF7. Interacts (active GTP-bound form) with both SHOC2 and PP1c (all isoforms) to form a tertiary complex; SHOC2 and PP1c preferably bind M-Ras/MRAS, but they also bind K-Ras/KRAS, N-Ras/NRAS and H-Ras/HRAS. Palmitoylated by the ZDHHC9-GOLGA7 complex. Depalmitoylated by ABHD17A, ABHD17B and ABHD17C. A continuous cycle of de- and re-palmitoylation regulates rapid exchange between plasma membrane and Golgi. In terms of processing, acetylation at Lys-104 prevents interaction with guanine nucleotide exchange factors (GEFs). Post-translationally, ubiquitinated by the BCR(LZTR1) E3 ubiquitin ligase complex at Lys-170 in a non-degradative manner, leading to inhibit Ras signaling by decreasing Ras association with membranes. Phosphorylation at Ser-89 enhances NRAS association with its downstream effectors.

Its subcellular location is the cell membrane. The protein resides in the golgi apparatus membrane. It carries out the reaction GTP + H2O = GDP + phosphate + H(+). With respect to regulation, alternates between an inactive form bound to GDP and an active form bound to GTP. Activated by a guanine nucleotide-exchange factor (GEF) and inactivated by a GTPase-activating protein (GAP). Its function is as follows. Ras proteins bind GDP/GTP and possess intrinsic GTPase activity. This is GTPase NRas (Nras) from Rattus norvegicus (Rat).